We begin with the raw amino-acid sequence, 136 residues long: Heavy metal-associated isoprenylated plant protein 19 (136 aa).

An HMA domain is found at 13–77 (YMDVEFNVSM…LKKKTGKRVK (65 aa)). Residues C24 and C27 each contribute to the a metal cation site. The residue at position 133 (C133) is a Cysteine methyl ester. C133 carries S-farnesyl cysteine lipidation. Residues 134–136 (SIS) constitute a propeptide, removed in mature form.

It belongs to the HIPP family.

In terms of biological role, heavy-metal-binding protein. The sequence is that of Heavy metal-associated isoprenylated plant protein 19 from Arabidopsis thaliana (Mouse-ear cress).